Reading from the N-terminus, the 206-residue chain is Carbonic anhydrase (206 aa).

An Isoglutamyl lysine isopeptide (Lys-Gln) (interchain with Q-Cter in protein Pup) cross-link involves residue K11. Residues C51, D53, H104, and C107 each coordinate Zn(2+).

Belongs to the beta-class carbonic anhydrase family. As to quaternary structure, homotetramer. The cofactor is Zn(2+).

The catalysed reaction is hydrogencarbonate + H(+) = CO2 + H2O. In terms of biological role, catalyzes the reversible hydration of carbon dioxide to form bicarbonate. The polypeptide is Carbonic anhydrase (cynT) (Mycolicibacterium smegmatis (strain ATCC 700084 / mc(2)155) (Mycobacterium smegmatis)).